An 83-amino-acid polypeptide reads, in one-letter code: Acylphosphatase (83 aa).

An Acylphosphatase-like domain is found at 1 to 83 (MIEGRVQRVG…TGDDWFEVRY (83 aa)). Residues Arg-12 and Asn-30 contribute to the active site.

Belongs to the acylphosphatase family.

The catalysed reaction is an acyl phosphate + H2O = a carboxylate + phosphate + H(+). The chain is Acylphosphatase (acyP) from Synechococcus sp. (strain CC9605).